A 184-amino-acid chain; its full sequence is Nutrient stress-induced DNA-binding protein (184 aa).

This sequence belongs to the Dps family. As to quaternary structure, hexamer.

In terms of biological role, involved in protection of chromosomal DNA from damage under nutrient-limited and oxidative stress conditions. Binds heme. In Nostoc sp. (strain PCC 7120 / SAG 25.82 / UTEX 2576), this protein is Nutrient stress-induced DNA-binding protein (dpsA).